A 442-amino-acid chain; its full sequence is Amino-acid acetyltransferase (442 aa).

Positions 295–442 (EQARAATIED…RSKVLSKTIS (148 aa)) constitute an N-acetyltransferase domain.

This sequence belongs to the acetyltransferase family. ArgA subfamily.

The protein localises to the cytoplasm. It carries out the reaction L-glutamate + acetyl-CoA = N-acetyl-L-glutamate + CoA + H(+). Its pathway is amino-acid biosynthesis; L-arginine biosynthesis; N(2)-acetyl-L-ornithine from L-glutamate: step 1/4. In Aeromonas salmonicida (strain A449), this protein is Amino-acid acetyltransferase.